We begin with the raw amino-acid sequence, 195 residues long: Nucleoside triphosphate pyrophosphatase (195 aa).

The Proton acceptor role is filled by aspartate 70.

This sequence belongs to the Maf family. A divalent metal cation serves as cofactor.

The protein resides in the cytoplasm. The enzyme catalyses a ribonucleoside 5'-triphosphate + H2O = a ribonucleoside 5'-phosphate + diphosphate + H(+). The catalysed reaction is a 2'-deoxyribonucleoside 5'-triphosphate + H2O = a 2'-deoxyribonucleoside 5'-phosphate + diphosphate + H(+). In terms of biological role, nucleoside triphosphate pyrophosphatase. May have a dual role in cell division arrest and in preventing the incorporation of modified nucleotides into cellular nucleic acids. This is Nucleoside triphosphate pyrophosphatase from Synechocystis sp. (strain ATCC 27184 / PCC 6803 / Kazusa).